We begin with the raw amino-acid sequence, 1195 residues long: Cullin-associated NEDD8-dissociated protein 1 (1195 aa).

HEAT repeat units lie at residues 1-37 (MHDI…DESA), 45-83 (NQSL…YLSN), 168-206 (NPVT…KVAL), 397-434 (ELLS…TSPR), 436-474 (STNV…FDNT), 703-742 (ETHR…QIPD), 846-885 (QKHI…ACNE), and 999-1037 (PILD…EGLE).

This sequence belongs to the CAND family.

Key assembly factor of SCF (SKP1-CUL1-F-box protein) E3 ubiquitin ligase complexes that promotes the exchange of the substrate-recognition F-box subunit in SCF complexes, thereby playing a key role in the cellular repertoire of SCF complexes. Acts as a F-box protein exchange factor. This is Cullin-associated NEDD8-dissociated protein 1 (TIP120) from Candida albicans (strain SC5314 / ATCC MYA-2876) (Yeast).